Consider the following 1409-residue polypeptide: DNA-directed RNA polymerase subunit beta' (1409 aa).

4 residues coordinate Zn(2+): C72, C74, C87, and C90. Mg(2+) is bound by residues D462, D464, and D466. Residues C816, C890, C897, and C900 each contribute to the Zn(2+) site.

Belongs to the RNA polymerase beta' chain family. In terms of assembly, the RNAP catalytic core consists of 2 alpha, 1 beta, 1 beta' and 1 omega subunit. When a sigma factor is associated with the core the holoenzyme is formed, which can initiate transcription. Mg(2+) serves as cofactor. Requires Zn(2+) as cofactor.

The catalysed reaction is RNA(n) + a ribonucleoside 5'-triphosphate = RNA(n+1) + diphosphate. Functionally, DNA-dependent RNA polymerase catalyzes the transcription of DNA into RNA using the four ribonucleoside triphosphates as substrates. In Aromatoleum aromaticum (strain DSM 19018 / LMG 30748 / EbN1) (Azoarcus sp. (strain EbN1)), this protein is DNA-directed RNA polymerase subunit beta'.